A 238-amino-acid polypeptide reads, in one-letter code: Ribonuclease PH (238 aa).

Residues Arg-86 and 124-126 each bind phosphate; that span reads GTR.

It belongs to the RNase PH family. Homohexameric ring arranged as a trimer of dimers.

The enzyme catalyses tRNA(n+1) + phosphate = tRNA(n) + a ribonucleoside 5'-diphosphate. Functionally, phosphorolytic 3'-5' exoribonuclease that plays an important role in tRNA 3'-end maturation. Removes nucleotide residues following the 3'-CCA terminus of tRNAs; can also add nucleotides to the ends of RNA molecules by using nucleoside diphosphates as substrates, but this may not be physiologically important. Probably plays a role in initiation of 16S rRNA degradation (leading to ribosome degradation) during starvation. The chain is Ribonuclease PH from Enterobacter sp. (strain 638).